The following is a 291-amino-acid chain: Lipoyl synthase (291 aa).

[4Fe-4S] cluster contacts are provided by cysteine 33, cysteine 38, cysteine 44, cysteine 59, cysteine 63, cysteine 66, and serine 274. The 219-residue stretch at 45–263 (WGEGTATFLI…REAAEAMGFK (219 aa)) folds into the Radical SAM core domain.

This sequence belongs to the radical SAM superfamily. Lipoyl synthase family. The cofactor is [4Fe-4S] cluster.

It is found in the cytoplasm. The enzyme catalyses [[Fe-S] cluster scaffold protein carrying a second [4Fe-4S](2+) cluster] + N(6)-octanoyl-L-lysyl-[protein] + 2 oxidized [2Fe-2S]-[ferredoxin] + 2 S-adenosyl-L-methionine + 4 H(+) = [[Fe-S] cluster scaffold protein] + N(6)-[(R)-dihydrolipoyl]-L-lysyl-[protein] + 4 Fe(3+) + 2 hydrogen sulfide + 2 5'-deoxyadenosine + 2 L-methionine + 2 reduced [2Fe-2S]-[ferredoxin]. It participates in protein modification; protein lipoylation via endogenous pathway; protein N(6)-(lipoyl)lysine from octanoyl-[acyl-carrier-protein]: step 2/2. Catalyzes the radical-mediated insertion of two sulfur atoms into the C-6 and C-8 positions of the octanoyl moiety bound to the lipoyl domains of lipoate-dependent enzymes, thereby converting the octanoylated domains into lipoylated derivatives. The sequence is that of Lipoyl synthase from Pyrobaculum calidifontis (strain DSM 21063 / JCM 11548 / VA1).